The following is a 128-amino-acid chain: Small ribosomal subunit protein uS14m (128 aa).

Belongs to the universal ribosomal protein uS14 family. Component of the mitochondrial ribosome small subunit (28S) which comprises a 12S rRNA and about 30 distinct proteins. Interacts with LIAT1.

The protein localises to the mitochondrion. This Bos taurus (Bovine) protein is Small ribosomal subunit protein uS14m (MRPS14).